The chain runs to 497 residues: Glutamyl-tRNA(Gln) amidotransferase subunit A (497 aa).

Residues Lys91 and Ser166 each act as charge relay system in the active site. The segment at 143–171 (SSTENSAYGPTHNPWDLERTAGGSGGGSS) is disordered. Ser190 acts as the Acyl-ester intermediate in catalysis.

Belongs to the amidase family. GatA subfamily. As to quaternary structure, heterotrimer of A, B and C subunits.

The catalysed reaction is L-glutamyl-tRNA(Gln) + L-glutamine + ATP + H2O = L-glutaminyl-tRNA(Gln) + L-glutamate + ADP + phosphate + H(+). Its function is as follows. Allows the formation of correctly charged Gln-tRNA(Gln) through the transamidation of misacylated Glu-tRNA(Gln) in organisms which lack glutaminyl-tRNA synthetase. The reaction takes place in the presence of glutamine and ATP through an activated gamma-phospho-Glu-tRNA(Gln). This is Glutamyl-tRNA(Gln) amidotransferase subunit A from Corynebacterium glutamicum (strain ATCC 13032 / DSM 20300 / JCM 1318 / BCRC 11384 / CCUG 27702 / LMG 3730 / NBRC 12168 / NCIMB 10025 / NRRL B-2784 / 534).